A 105-amino-acid polypeptide reads, in one-letter code: Large ribosomal subunit protein bL21 (105 aa).

It belongs to the bacterial ribosomal protein bL21 family. Part of the 50S ribosomal subunit. Contacts protein L20.

Its function is as follows. This protein binds to 23S rRNA in the presence of protein L20. The sequence is that of Large ribosomal subunit protein bL21 from Dictyoglomus turgidum (strain DSM 6724 / Z-1310).